We begin with the raw amino-acid sequence, 328 residues long: P2Y purinoceptor 3 (328 aa).

The Extracellular segment spans residues 1–22 (MSMANFTAGRNSCTFQEEFKQV). The N-linked (GlcNAc...) asparagine glycan is linked to N5. A helical membrane pass occupies residues 23–43 (LLPLVYSVVFLLGLPLNAVVI). Over 44 to 57 (GQIWLARKALTRTT) the chain is Cytoplasmic. The helical transmembrane segment at 58 to 78 (IYMLNLATADLLYVCSLPLLI) threads the bilayer. The Extracellular segment spans residues 79 to 96 (YNYTQKDYWPFGDFTCKF). The cysteines at positions 94 and 172 are disulfide-linked. The helical transmembrane segment at 97 to 117 (VRFQFYTNLHGSILFLTCISV) threads the bilayer. At 118–139 (QRYMGICHPLASWHKKKGKKLT) the chain is on the cytoplasmic side. The helical transmembrane segment at 140–160 (WLVCAAVWFIVIAQCLPTFVF) threads the bilayer. Residues 161–189 (ASTGTQRNRTVCYDLSPPDRSASYFPYGI) lie on the Extracellular side of the membrane. Residues 190–210 (TLTITGFLLPFAAILACYCSM) form a helical membrane-spanning segment. The Cytoplasmic segment spans residues 211–231 (ARILCQKDELIGLAVHKKKDK). A helical transmembrane segment spans residues 232–252 (AVRMIIIVVIVFSISFFPFHL). Residues 253 to 275 (TKTIYLIVRSSPTLPCPTLQAFA) are Extracellular-facing. A helical membrane pass occupies residues 276–298 (IAYKCTRPFASMNSVLDPILFYF). Residues 299-323 (TQRKFRESTRYLLDKMSSKWRHDHC) are Cytoplasmic-facing.

It belongs to the G-protein coupled receptor 1 family.

The protein localises to the cell membrane. In terms of biological role, receptor for extracellular UDP &gt; ADP = UTP. The activity of this receptor is mediated by G proteins which activate a phosphatidylinositol-calcium second messenger system. The polypeptide is P2Y purinoceptor 3 (P2RY3) (Meleagris gallopavo (Wild turkey)).